The chain runs to 137 residues: Nucleoside diphosphate kinase (137 aa).

Residues Lys-9, Phe-57, Arg-85, Thr-91, Arg-102, and Asn-112 each contribute to the ATP site. His-115 (pros-phosphohistidine intermediate) is an active-site residue.

This sequence belongs to the NDK family. Homotetramer. Requires Mg(2+) as cofactor.

The protein localises to the cytoplasm. The catalysed reaction is a 2'-deoxyribonucleoside 5'-diphosphate + ATP = a 2'-deoxyribonucleoside 5'-triphosphate + ADP. It catalyses the reaction a ribonucleoside 5'-diphosphate + ATP = a ribonucleoside 5'-triphosphate + ADP. Major role in the synthesis of nucleoside triphosphates other than ATP. The ATP gamma phosphate is transferred to the NDP beta phosphate via a ping-pong mechanism, using a phosphorylated active-site intermediate. The protein is Nucleoside diphosphate kinase of Campylobacter fetus subsp. fetus (strain 82-40).